The primary structure comprises 1413 residues: DNA-directed RNA polymerase subunit beta' (1413 aa).

Residues Cys-72, Cys-74, Cys-87, and Cys-90 each coordinate Zn(2+). 3 residues coordinate Mg(2+): Asp-463, Asp-465, and Asp-467. 4 residues coordinate Zn(2+): Cys-811, Cys-885, Cys-892, and Cys-895.

The protein belongs to the RNA polymerase beta' chain family. As to quaternary structure, the RNAP catalytic core consists of 2 alpha, 1 beta, 1 beta' and 1 omega subunit. When a sigma factor is associated with the core the holoenzyme is formed, which can initiate transcription. The cofactor is Mg(2+). It depends on Zn(2+) as a cofactor.

It catalyses the reaction RNA(n) + a ribonucleoside 5'-triphosphate = RNA(n+1) + diphosphate. In terms of biological role, DNA-dependent RNA polymerase catalyzes the transcription of DNA into RNA using the four ribonucleoside triphosphates as substrates. This chain is DNA-directed RNA polymerase subunit beta', found in Ruegeria pomeroyi (strain ATCC 700808 / DSM 15171 / DSS-3) (Silicibacter pomeroyi).